The sequence spans 150 residues: Phosphopantetheine adenylyltransferase (150 aa).

Thr15 serves as a coordination point for substrate. ATP contacts are provided by residues 15–16 and His23; that span reads TF. The substrate site is built by Ile80 and Arg94. Residues 95-97, Glu105, and 130-136 contribute to the ATP site; these read GIR and LENISSR.

The protein belongs to the bacterial CoaD family. In terms of assembly, homohexamer. The cofactor is Mg(2+).

The protein localises to the cytoplasm. The enzyme catalyses (R)-4'-phosphopantetheine + ATP + H(+) = 3'-dephospho-CoA + diphosphate. It functions in the pathway cofactor biosynthesis; coenzyme A biosynthesis; CoA from (R)-pantothenate: step 4/5. Functionally, reversibly transfers an adenylyl group from ATP to 4'-phosphopantetheine, yielding dephospho-CoA (dPCoA) and pyrophosphate. This chain is Phosphopantetheine adenylyltransferase, found in Malacoplasma penetrans (strain HF-2) (Mycoplasma penetrans).